The chain runs to 291 residues: Lipoyl synthase, mitochondrial (291 aa).

Positions 45, 50, 56, 71, 75, 78, and 283 each coordinate [4Fe-4S] cluster. One can recognise a Radical SAM core domain in the interval W57–R272.

The protein belongs to the radical SAM superfamily. Lipoyl synthase family. Requires [4Fe-4S] cluster as cofactor.

It localises to the mitochondrion. It carries out the reaction [[Fe-S] cluster scaffold protein carrying a second [4Fe-4S](2+) cluster] + N(6)-octanoyl-L-lysyl-[protein] + 2 oxidized [2Fe-2S]-[ferredoxin] + 2 S-adenosyl-L-methionine + 4 H(+) = [[Fe-S] cluster scaffold protein] + N(6)-[(R)-dihydrolipoyl]-L-lysyl-[protein] + 4 Fe(3+) + 2 hydrogen sulfide + 2 5'-deoxyadenosine + 2 L-methionine + 2 reduced [2Fe-2S]-[ferredoxin]. It participates in protein modification; protein lipoylation via endogenous pathway; protein N(6)-(lipoyl)lysine from octanoyl-[acyl-carrier-protein]: step 2/2. Its function is as follows. Catalyzes the radical-mediated insertion of two sulfur atoms into the C-6 and C-8 positions of the octanoyl moiety bound to the lipoyl domains of lipoate-dependent enzymes, thereby converting the octanoylated domains into lipoylated derivatives. The protein is Lipoyl synthase, mitochondrial of Nematostella vectensis (Starlet sea anemone).